The chain runs to 188 residues: Elongation factor P (188 aa).

An N6-(3,6-diaminohexanoyl)-5-hydroxylysine modification is found at K34.

It belongs to the elongation factor P family. May be beta-lysylated on the epsilon-amino group of Lys-34 by the combined action of EpmA and EpmB, and then hydroxylated on the C5 position of the same residue by EpmC (if this protein is present). Lysylation is critical for the stimulatory effect of EF-P on peptide-bond formation. The lysylation moiety may extend toward the peptidyltransferase center and stabilize the terminal 3-CCA end of the tRNA. Hydroxylation of the C5 position on Lys-34 may allow additional potential stabilizing hydrogen-bond interactions with the P-tRNA.

Its subcellular location is the cytoplasm. Its pathway is protein biosynthesis; polypeptide chain elongation. Functionally, involved in peptide bond synthesis. Alleviates ribosome stalling that occurs when 3 or more consecutive Pro residues or the sequence PPG is present in a protein, possibly by augmenting the peptidyl transferase activity of the ribosome. Modification of Lys-34 is required for alleviation. This is Elongation factor P from Pectobacterium atrosepticum (strain SCRI 1043 / ATCC BAA-672) (Erwinia carotovora subsp. atroseptica).